A 399-amino-acid polypeptide reads, in one-letter code: Elongation factor Tu (399 aa).

The tr-type G domain occupies 10–208; the sequence is KPHVNIGTIG…TVDSYIPEPE (199 aa). The tract at residues 19–26 is G1; sequence GHVDHGKT. 19–26 contributes to the GTP binding site; that stretch reads GHVDHGKT. Threonine 26 lines the Mg(2+) pocket. Residues 64 to 68 form a G2 region; the sequence is GITIN. The tract at residues 85 to 88 is G3; that stretch reads DAPG. GTP contacts are provided by residues 85 to 89 and 140 to 143; these read DAPGH and NKVD. The segment at 140–143 is G4; sequence NKVD. The tract at residues 178 to 180 is G5; it reads SAL.

Belongs to the TRAFAC class translation factor GTPase superfamily. Classic translation factor GTPase family. EF-Tu/EF-1A subfamily. As to quaternary structure, monomer.

Its subcellular location is the cytoplasm. The enzyme catalyses GTP + H2O = GDP + phosphate + H(+). Its function is as follows. GTP hydrolase that promotes the GTP-dependent binding of aminoacyl-tRNA to the A-site of ribosomes during protein biosynthesis. The chain is Elongation factor Tu from Streptococcus pyogenes serotype M12 (strain MGAS2096).